The sequence spans 367 residues: o-succinylbenzoate synthase (367 aa).

The active-site Proton donor is the K164. Mg(2+) is bound by residues D189, E214, and D239. K263 (proton acceptor) is an active-site residue.

This sequence belongs to the mandelate racemase/muconate lactonizing enzyme family. MenC type 2 subfamily. As to quaternary structure, homodimer. A divalent metal cation is required as a cofactor.

It carries out the reaction (1R,6R)-6-hydroxy-2-succinyl-cyclohexa-2,4-diene-1-carboxylate = 2-succinylbenzoate + H2O. The protein operates within quinol/quinone metabolism; 1,4-dihydroxy-2-naphthoate biosynthesis; 1,4-dihydroxy-2-naphthoate from chorismate: step 4/7. It participates in quinol/quinone metabolism; menaquinone biosynthesis. Converts 2-succinyl-6-hydroxy-2,4-cyclohexadiene-1-carboxylate (SHCHC) to 2-succinylbenzoate (OSB). Also acts as a N-succinylamino acid racemase (NSAR) that catalyzes the racemization of N-succinyl-L-phenylglycine. Since the gene is encoded in a menaquinone synthesis operon, OSB synthase is probably the physiological activity. A pathway that requires NSAR activity has not been identified in this species, so whether NSAR is also a biological activity is unknown. This Enterococcus faecalis (strain ATCC 700802 / V583) protein is o-succinylbenzoate synthase.